Consider the following 431-residue polypeptide: MAKIINVIGREIMDSRGNPTVEAEVHLEGGFIGMAAAPSGASTGSREALELRDGDKSRYLGKGVLTAVANVNGPIRAALIGKDATAQAELDQIMIDLDGTENKDKLGANAILAVSLAAAKAAAAFKGMPLYAHIAELNGTPGQYAMPVPMMNILNGGEHADNNVDIQEFMVQPVGAKNFREALRMGAEIFHTLKKVLHGKGLSTSVGDEGGFAPNLSSNADALAVIKEAVELAGYKLGTDVTLALDCAASEFYKDGKYDLSGEGKVFDSNGFSDFLKSLTEQYPIVSIEDGLDESDWDGWAYQTKIMGDKIQLVGDDLFVTNTKILTRGIENGIANSILIKFNQIGSLTETLAAIRMAKAAGYTAVISHRSGETEDSTIADLAVGTAAGQIKTGSLCRSDRVAKYNQLLRIEEQLGEKAPYRGLKEIKGQA.

Glutamine 167 is a (2R)-2-phosphoglycerate binding site. The active-site Proton donor is glutamate 209. Aspartate 246, glutamate 289, and aspartate 316 together coordinate Mg(2+). (2R)-2-phosphoglycerate is bound by residues lysine 341, arginine 370, serine 371, and lysine 392. Lysine 341 functions as the Proton acceptor in the catalytic mechanism.

This sequence belongs to the enolase family. Component of the RNA degradosome, a multiprotein complex involved in RNA processing and mRNA degradation. It depends on Mg(2+) as a cofactor.

Its subcellular location is the cytoplasm. The protein resides in the secreted. It is found in the cell surface. The enzyme catalyses (2R)-2-phosphoglycerate = phosphoenolpyruvate + H2O. The protein operates within carbohydrate degradation; glycolysis; pyruvate from D-glyceraldehyde 3-phosphate: step 4/5. Functionally, catalyzes the reversible conversion of 2-phosphoglycerate (2-PG) into phosphoenolpyruvate (PEP). It is essential for the degradation of carbohydrates via glycolysis. The sequence is that of Enolase from Shewanella sp. (strain ANA-3).